The chain runs to 655 residues: MLYPQEFDVIVVGGGHAGTEAALAAARMGSRTLLLTHNIETLGQMSCNPSIGGIGKGHLVKEVDALGGAMALATDEGGIQFRILNSSKGPAVRATRAQADRILYKAAIRRMLENQPNLWLFQQAVDDLMVEGDRVVGAITQVGIRFRARTVVLTAGTFLDGKIHVGLNNYSAGRAGDPPAVSLSARLKELQLPQGRLKTGTPPRIDGRSIDFSQCEEQPGDGMPGGVNEGTLPVFSFMGSTAMHPRQVPCWITHTNERTHEIIRSGFDRSPMFTGKIEGVGPRYCPSVEDKINRFADKDSHQIFLEPEGLTTHEFYPNGISTSLPFDVQYDLVRSMRGLENAHILRPGYAIEYDYFDPRSLKSNFETRQIQGLFFAGQINGTTGYEEAAAQGLFAGINAALQCRGESAWLPRRDEAYLGVLVNDLITKGVTEPYRMFTSRAEFRLQLREDNADMRLTEAGRRMGLVDDARWDAFSRKRDAVARETERLKSTWVNPRNLPAEESARVLGKSIEHEYNLFDLLRRPDVTYDALTGMDGGKYASTAVSRETLGELSAPVIEQVEIAAKYAGYIDRQKDEVQRAFYYENLQLPQELDYMQVAALSIEVRQKLQKHRPETLGQASRISGVTPAAVSLLLVHLKKGGFRGFTAQQADEVAA.

13 to 18 (GGGHAG) is a binding site for FAD. NAD(+) is bound at residue 281–295 (GPRYCPSVEDKINRF).

This sequence belongs to the MnmG family. In terms of assembly, homodimer. Heterotetramer of two MnmE and two MnmG subunits. The cofactor is FAD.

Its subcellular location is the cytoplasm. NAD-binding protein involved in the addition of a carboxymethylaminomethyl (cmnm) group at the wobble position (U34) of certain tRNAs, forming tRNA-cmnm(5)s(2)U34. The chain is tRNA uridine 5-carboxymethylaminomethyl modification enzyme MnmG from Paracidovorax citrulli (strain AAC00-1) (Acidovorax citrulli).